The primary structure comprises 893 residues: 26S proteasome non-ATPase regulatory subunit 2 (893 aa).

A disordered region spans residues 1–59 (MPQKEVTIPVPAKGGSNKEEDKKDNKDTEEKNTTTNTTTKDNKKDKKKDKKEETLSPED). Composition is skewed to basic and acidic residues over residues 16–32 (SNKE…EEKN) and 40–59 (KDNK…SPED). PC repeat units follow at residues 412–445 (STVA…HCSN), 446–482 (GALM…GTRI), 483–517 (SAIF…KMEF), 522–555 (GLAL…ASES), 562–583 (LGLG…ETLK), 666–700 (AIPL…EVAQ), and 701–735 (GAIL…DVHL).

It belongs to the proteasome subunit S2 family.

In terms of biological role, acts as a regulatory subunit of the 26 proteasome which is involved in the ATP-dependent degradation of ubiquitinated proteins. The polypeptide is 26S proteasome non-ATPase regulatory subunit 2 (psmD2) (Dictyostelium discoideum (Social amoeba)).